A 344-amino-acid chain; its full sequence is Phenylalanine--tRNA ligase alpha subunit (344 aa).

Glutamate 256 is a binding site for Mg(2+).

Belongs to the class-II aminoacyl-tRNA synthetase family. Phe-tRNA synthetase alpha subunit type 1 subfamily. As to quaternary structure, tetramer of two alpha and two beta subunits. It depends on Mg(2+) as a cofactor.

It is found in the cytoplasm. The enzyme catalyses tRNA(Phe) + L-phenylalanine + ATP = L-phenylalanyl-tRNA(Phe) + AMP + diphosphate + H(+). In Bacillus subtilis (strain 168), this protein is Phenylalanine--tRNA ligase alpha subunit (pheS).